The chain runs to 1183 residues: DNA-directed RNA polymerase subunit beta (1183 aa).

Belongs to the RNA polymerase beta chain family. As to quaternary structure, the RNAP catalytic core consists of 2 alpha, 1 beta, 1 beta' and 1 omega subunit. When a sigma factor is associated with the core the holoenzyme is formed, which can initiate transcription.

It catalyses the reaction RNA(n) + a ribonucleoside 5'-triphosphate = RNA(n+1) + diphosphate. In terms of biological role, DNA-dependent RNA polymerase catalyzes the transcription of DNA into RNA using the four ribonucleoside triphosphates as substrates. In Staphylococcus aureus (strain JH9), this protein is DNA-directed RNA polymerase subunit beta.